A 442-amino-acid chain; its full sequence is GTPase Der (442 aa).

EngA-type G domains are found at residues 2–167 and 175–351; these read RTIA…PIQN and FKFC…EQAM. GTP contacts are provided by residues 8–15, 55–59, 119–122, 181–188, 228–232, and 293–296; these read GKPNVGKS, DTGGI, NKVE, GRPNVGKS, DTAGV, and NKWD. Positions 352–436 constitute a KH-like domain; sequence RKVATSLLND…PITLYWQDKN (85 aa).

This sequence belongs to the TRAFAC class TrmE-Era-EngA-EngB-Septin-like GTPase superfamily. EngA (Der) GTPase family. Associates with the 50S ribosomal subunit.

Its function is as follows. GTPase that plays an essential role in the late steps of ribosome biogenesis. This chain is GTPase Der, found in Ureaplasma urealyticum serovar 10 (strain ATCC 33699 / Western).